We begin with the raw amino-acid sequence, 337 residues long: Formamidase (337 aa).

The region spanning 14-257 is the CN hydrolase domain; sequence VVIGLVQLQL…DEIITAEVRP (244 aa). The Proton acceptor role is filled by E60. The active-site Proton donor is the K129. C162 (nucleophile) is an active-site residue.

It belongs to the carbon-nitrogen hydrolase superfamily. Aliphatic amidase family.

It catalyses the reaction formamide + H2O = formate + NH4(+). In terms of biological role, is an aliphatic amidase with a restricted substrate specificity, as it only hydrolyzes formamide. The chain is Formamidase from Bradyrhizobium sp. (strain ORS 278).